A 682-amino-acid chain; its full sequence is Transcription activator of gluconeogenesis PODANS_4_8760 (682 aa).

The disordered stretch occupies residues Met1–Lys72. Residues Gly9–Glu21 show a composition bias toward low complexity. Basic and acidic residues-rich tracts occupy residues His29–Ser41 and Gly54–Arg67. Residues Cys77–Cys105 constitute a DNA-binding region (zn(2)-C6 fungal-type). 5 disordered regions span residues Glu122–Ser148, Leu181–Val211, Pro325–Lys375, Asn509–Gly541, and Thr586–Leu622. Composition is skewed to polar residues over residues Leu185 to Pro206, Thr329 to Thr345, and Pro354 to Pro373.

This sequence belongs to the ERT1/acuK family.

Its subcellular location is the nucleus. Its function is as follows. Transcription factor which regulates nonfermentable carbon utilization. Activator of gluconeogenetic genes. This chain is Transcription activator of gluconeogenesis PODANS_4_8760, found in Podospora anserina (strain S / ATCC MYA-4624 / DSM 980 / FGSC 10383) (Pleurage anserina).